Consider the following 238-residue polypeptide: MIVCLDSGNTRIKWGVHDGVKWLAQGAVAHAEVGALSRLVAEWPLPEKVMLANVAGVEAGSRIREQLAAWAPVFHEVRPELRRCGVTNLYKSPERLGVDRWCALLGARSLVDSATVVVMAGTATTIDTLDADGNFLGGVIMPGIGLMLRSLAHGTAALPFADGEYATYPRCTDDAIVTGVIDAQAGAIERIFSRLDDPAASCLLSGGYAEQIAVHLVVRHRLADNLPLEGLRHLALKS.

ATP is bound at residue 6–13; it reads DSGNTRIK. Substrate-binding positions include Tyr90 and 97-100; that span reads GVDR. The Proton acceptor role is filled by Asp99. Residue Thr122 participates in ATP binding. Thr172 is a binding site for substrate.

Belongs to the type III pantothenate kinase family. As to quaternary structure, homodimer. It depends on NH4(+) as a cofactor. K(+) is required as a cofactor.

It localises to the cytoplasm. It catalyses the reaction (R)-pantothenate + ATP = (R)-4'-phosphopantothenate + ADP + H(+). It participates in cofactor biosynthesis; coenzyme A biosynthesis; CoA from (R)-pantothenate: step 1/5. In terms of biological role, catalyzes the phosphorylation of pantothenate (Pan), the first step in CoA biosynthesis. The chain is Type III pantothenate kinase from Dechloromonas aromatica (strain RCB).